The chain runs to 841 residues: Nuclear RNA export factor 2 (841 aa).

The segment at 1 to 285 (MPNQMRVLDF…NFELVDGKPF (285 aa)) is RNA-binding unit probably involved in Piwi-dependent recruitment and single-stranded RNA-PPNP complex formation. LRR repeat units follow at residues 200–221 (RLNG…TLLA), 224–245 (DYAL…CRAL), and 249–270 (RARE…PANI). The segment at 286-553 (NMLHKIFSPL…EYVRAVKEVF (268 aa)) is necessary for silencing function. The 84-residue stretch at 325–408 (WHAFMIPDPS…IFRYYLRMNV (84 aa)) folds into the RRM domain. 3 LRR repeats span residues 475-496 (TCSE…HVLG), 500-521 (CLRA…HSLG), and 524-545 (PLKS…PSEY). In terms of domain architecture, NTF2 spans 585–758 (LVGAFLENYL…LKIANERLHI (174 aa)). In terms of domain architecture, TAP-C spans 788–841 (DVKDHKLLLFQEVTGLISTWVTSIVEEADWDFERALKLFIQKNADHEIPDLAFA).

Belongs to the NXF family. In the ovaries, part of a complex composed of at least Panx, nxf2, piwi and Nxt1. The complex is knowns as Panx-induced cotranscriptional silencing (PICTS) complex, Panx-nxf2-dependent TAP/p15 silencing (Pandas complex), SFiNX (silencing factor interacting nuclear export variant) or piwi-Panx-nxf2-p15 (PPNP) complex. Interacts (via TAP-C domain) with Panx (via NIR region); the interaction is direct. Interacts (via NTF2 domain) with Nxt1; the interaction is direct and prevents Nxt1 binding to nucleoporins. Interacts with sbr/Nxf1. In terms of tissue distribution, expressed in female gonads (at protein level). Expressed ubiquitously.

The protein localises to the cytoplasm. It is found in the nucleus. Its subcellular location is the nucleoplasm. Its function is as follows. May be involved in the export of mRNA from the nucleus to the cytoplasm. In the ovaries, forms a complex with nxf2, piwi and Nxt1 which acts as effectors of cotranscriptional transposon silencing. On recruitment to a target transcript, interacts with single stranded RNA, thereby anchoring the complex via the nascent target transcript to chromatin and allowing Panx to recruit silencing effectors to establishing repressive heterochromatin at transposon loci. Does not affect piRNA biogenesis. The interaction with Panx stabilizes the nuclear protein complex. Does not bind nucleoporins, but regulates sbr/Nxf1 binding to nucleoporins and, indirectly, transposon exports. This is Nuclear RNA export factor 2 (nxf2) from Drosophila melanogaster (Fruit fly).